A 232-amino-acid chain; its full sequence is Large ribosomal subunit protein uL1 (232 aa).

Belongs to the universal ribosomal protein uL1 family. As to quaternary structure, part of the 50S ribosomal subunit.

In terms of biological role, binds directly to 23S rRNA. The L1 stalk is quite mobile in the ribosome, and is involved in E site tRNA release. Protein L1 is also a translational repressor protein, it controls the translation of the L11 operon by binding to its mRNA. This chain is Large ribosomal subunit protein uL1, found in Bordetella petrii (strain ATCC BAA-461 / DSM 12804 / CCUG 43448).